The sequence spans 190 residues: Shikimate kinase (190 aa).

19–24 (GSGKTT) lines the ATP pocket. Thr23 provides a ligand contact to Mg(2+). Residues Asp41, Arg65, and Gly87 each coordinate substrate. Arg124 provides a ligand contact to ATP. Arg143 contributes to the substrate binding site.

This sequence belongs to the shikimate kinase family. Monomer. Requires Mg(2+) as cofactor.

The protein resides in the cytoplasm. It catalyses the reaction shikimate + ATP = 3-phosphoshikimate + ADP + H(+). The protein operates within metabolic intermediate biosynthesis; chorismate biosynthesis; chorismate from D-erythrose 4-phosphate and phosphoenolpyruvate: step 5/7. Catalyzes the specific phosphorylation of the 3-hydroxyl group of shikimic acid using ATP as a cosubstrate. The polypeptide is Shikimate kinase (Synechococcus sp. (strain ATCC 27144 / PCC 6301 / SAUG 1402/1) (Anacystis nidulans)).